Consider the following 25-residue polypeptide: Dermaseptin-5.2TR (25 aa).

V25 is subject to Valine amide.

In terms of tissue distribution, expressed by the skin glands.

Its subcellular location is the secreted. Functionally, has antimicrobial activity. The chain is Dermaseptin-5.2TR from Phyllomedusa trinitatis (Trinidad leaf frog).